Reading from the N-terminus, the 229-residue chain is Dephospho-CoA kinase domain-containing protein (229 aa).

The DPCK domain maps to 3 to 207; that stretch reads LVGLTGGIAS…DCMQFLIIRA (205 aa). 8 to 15 provides a ligand contact to ATP; sequence GGIASGKS.

It belongs to the CoaE family.

This Danio rerio (Zebrafish) protein is Dephospho-CoA kinase domain-containing protein (dcakd).